The chain runs to 277 residues: Large ribosomal subunit protein uL2 (277 aa).

Disordered stretches follow at residues 37-60 (KNST…GHKH) and 223-265 (VVMN…KRTD). The span at 39–49 (STAGRNSNGHI) shows a compositional bias: polar residues. Basic residues predominate over residues 50–60 (TTRHKGGGHKH). Residues 229–244 (DHPHGGGEGRTGEARE) show a composition bias toward basic and acidic residues.

This sequence belongs to the universal ribosomal protein uL2 family. In terms of assembly, part of the 50S ribosomal subunit. Forms a bridge to the 30S subunit in the 70S ribosome.

One of the primary rRNA binding proteins. Required for association of the 30S and 50S subunits to form the 70S ribosome, for tRNA binding and peptide bond formation. It has been suggested to have peptidyltransferase activity; this is somewhat controversial. Makes several contacts with the 16S rRNA in the 70S ribosome. The chain is Large ribosomal subunit protein uL2 from Neisseria meningitidis serogroup C (strain 053442).